The sequence spans 392 residues: Selenide, water dikinase 1 (392 aa).

Residue cysteine 31 is part of the active site. ATP is bound by residues lysine 32, 67–69, aspartate 87, aspartate 110, and 161–164; these read GMD and GGQT. Aspartate 69 is a Mg(2+) binding site. Mg(2+) is bound at residue aspartate 110. Aspartate 265 provides a ligand contact to Mg(2+).

This sequence belongs to the selenophosphate synthase 1 family. Class II subfamily. In terms of assembly, homodimer. The cofactor is Mg(2+).

Its subcellular location is the cell membrane. It localises to the nucleus membrane. The catalysed reaction is hydrogenselenide + ATP + H2O = selenophosphate + AMP + phosphate + 2 H(+). In terms of biological role, synthesizes selenophosphate from selenide and ATP. The sequence is that of Selenide, water dikinase 1 (sephs1) from Xenopus laevis (African clawed frog).